Consider the following 533-residue polypeptide: D-3-phosphoglycerate dehydrogenase (533 aa).

Alanine 2 bears the N-acetylalanine mark. Serine 14 is modified (phosphoserine). Lysine 21 carries the post-translational modification N6-acetyllysine; alternate. Residue lysine 21 forms a Glycyl lysine isopeptide (Lys-Gly) (interchain with G-Cter in SUMO1); alternate linkage. Lysine 21 participates in a covalent cross-link: Glycyl lysine isopeptide (Lys-Gly) (interchain with G-Cter in SUMO2); alternate. An N6-acetyllysine modification is found at lysine 58. Residues threonine 78, 155-156 (RI), aspartate 175, threonine 207, 234-236 (CAR), and aspartate 260 each bind NAD(+). Threonine 78 is modified (phosphothreonine). Arginine 236 is an active-site residue. Glutamate 265 is an active-site residue. Residue histidine 283 is the Proton donor of the active site. 283–286 (HLGA) provides a ligand contact to NAD(+).

It belongs to the D-isomer specific 2-hydroxyacid dehydrogenase family. In terms of assembly, homotetramer.

The enzyme catalyses (2R)-3-phosphoglycerate + NAD(+) = 3-phosphooxypyruvate + NADH + H(+). It carries out the reaction (R)-2-hydroxyglutarate + NAD(+) = 2-oxoglutarate + NADH + H(+). It catalyses the reaction (S)-malate + NAD(+) = oxaloacetate + NADH + H(+). The protein operates within amino-acid biosynthesis; L-serine biosynthesis; L-serine from 3-phospho-D-glycerate: step 1/3. In terms of biological role, catalyzes the reversible oxidation of 3-phospho-D-glycerate to 3-phosphonooxypyruvate, the first step of the phosphorylated L-serine biosynthesis pathway. Also catalyzes the reversible oxidation of 2-hydroxyglutarate to 2-oxoglutarate and the reversible oxidation of (S)-malate to oxaloacetate. The polypeptide is D-3-phosphoglycerate dehydrogenase (PHGDH) (Pongo abelii (Sumatran orangutan)).